Here is a 159-residue protein sequence, read N- to C-terminus: Putative ribosomal RNA large subunit methyltransferase H (159 aa).

S-adenosyl-L-methionine is bound by residues leucine 76, glycine 108, and 127–132 (FSKMTF).

It belongs to the RNA methyltransferase RlmH family.

The protein resides in the cytoplasm. It carries out the reaction pseudouridine(1915) in 23S rRNA + S-adenosyl-L-methionine = N(3)-methylpseudouridine(1915) in 23S rRNA + S-adenosyl-L-homocysteine + H(+). Functionally, specifically methylates the pseudouridine at position 1915 (m3Psi1915) in 23S rRNA. This Methanococcus vannielii (strain ATCC 35089 / DSM 1224 / JCM 13029 / OCM 148 / SB) protein is Putative ribosomal RNA large subunit methyltransferase H.